We begin with the raw amino-acid sequence, 1470 residues long: Guanine nucleotide exchange factor subunit R06F6.8 (1470 aa).

WD repeat units follow at residues 20–58, 68–107, and 472–512; these read STAA…LLCS, ETRG…DEQC, and AYCS…VVGV. Disordered regions lie at residues 673–710, 975–1001, 1017–1045, and 1238–1259; these read QSQN…PMNQ, FFRT…ADSS, RLNK…SKDK, and RSPS…SPSS. The segment covering 689–707 has biased composition (low complexity); that stretch reads SNVSIQSVSTSTTSEPSSP. Residues 983–1001 show a composition bias toward polar residues; sequence AKTSLSRRPTVSSPSADSS. Residues 1028-1045 show a composition bias toward basic and acidic residues; that stretch reads EQKDAPRKDSIGGSSKDK. Residues 1294–1314 traverse the membrane as a helical segment; that stretch reads LLLSLFSQTATIDWIFLFCLL. A compositionally biased stretch (basic and acidic residues) spans 1385 to 1403; sequence SPDNENRKASQKTSADDPK. A disordered region spans residues 1385–1447; that stretch reads SPDNENRKAS…SADRAHKSVK (63 aa). Residues 1411–1424 show a composition bias toward polar residues; the sequence is SGSSKLNNSFSNPK. A compositionally biased stretch (basic and acidic residues) spans 1431-1447; the sequence is GRRERSRSADRAHKSVK.

Belongs to the RIC1 family. In terms of assembly, component of a guanine nucleotide exchange factor (GEF) complex.

The protein resides in the membrane. In terms of biological role, probable component of a guanine nucleotide exchange factor (GEF) that may be required for efficient fusion of endosome-derived vesicles with the Golgi. This Caenorhabditis elegans protein is Guanine nucleotide exchange factor subunit R06F6.8.